Here is a 310-residue protein sequence, read N- to C-terminus: Transcription factor UNE12 (310 aa).

Disordered regions lie at residues 124–156 (HGQP…ATDP) and 229–253 (SSSV…WSND). One can recognise a bHLH domain in the interval 152–201 (QATDPHSIAERLRRERIAERIRALQELVPTVNKTDRAAMIDEIVDYVKFL).

As to quaternary structure, homodimer. In terms of tissue distribution, expressed constitutively in roots, leaves, stems, and flowers.

The protein resides in the nucleus. In terms of biological role, required for ovule fertilization. The chain is Transcription factor UNE12 (UNE12) from Arabidopsis thaliana (Mouse-ear cress).